The chain runs to 89 residues: Small ribosomal subunit protein uS15 (89 aa).

The segment covering 1 to 21 (MSLHQERKSELVSKFRTHESD) has biased composition (basic and acidic residues). Positions 1 to 25 (MSLHQERKSELVSKFRTHESDTGSP) are disordered.

Belongs to the universal ribosomal protein uS15 family. Part of the 30S ribosomal subunit. Forms a bridge to the 50S subunit in the 70S ribosome, contacting the 23S rRNA.

In terms of biological role, one of the primary rRNA binding proteins, it binds directly to 16S rRNA where it helps nucleate assembly of the platform of the 30S subunit by binding and bridging several RNA helices of the 16S rRNA. Forms an intersubunit bridge (bridge B4) with the 23S rRNA of the 50S subunit in the ribosome. This chain is Small ribosomal subunit protein uS15, found in Myxococcus xanthus (strain DK1622).